Consider the following 34-residue polypeptide: MINWQVLGQLIATGTIMLAGPAVIVLLALKKGNL.

The chain crosses the membrane as a helical span at residues 9-29; the sequence is QLIATGTIMLAGPAVIVLLAL.

The protein belongs to the Psb30/Ycf12 family. PSII is composed of 1 copy each of membrane proteins PsbA, PsbB, PsbC, PsbD, PsbE, PsbF, PsbH, PsbI, PsbJ, PsbK, PsbL, PsbM, PsbT, PsbX, PsbY, PsbZ, Psb30/Ycf12, peripheral proteins of the oxygen-evolving complex and a large number of cofactors. It forms dimeric complexes.

It is found in the plastid. It localises to the chloroplast thylakoid membrane. In terms of biological role, a core subunit of photosystem II (PSII), probably helps stabilize the reaction center. In Phaeodactylum tricornutum (strain CCAP 1055/1), this protein is Photosystem II reaction center protein Psb30.